Here is a 333-residue protein sequence, read N- to C-terminus: Holliday junction branch migration complex subunit RuvB (333 aa).

The interval 1–182 is large ATPase domain (RuvB-L); it reads MDERLLSGES…FGVLSRLEYY (182 aa). ATP contacts are provided by residues leucine 21, arginine 22, glycine 63, lysine 66, threonine 67, threonine 68, 129 to 131, arginine 172, tyrosine 182, and arginine 219; that span reads EDF. Threonine 67 lines the Mg(2+) pocket. The segment at 183-253 is small ATPAse domain (RuvB-S); that stretch reads TVDQLSAIVE…ITQMALELLQ (71 aa). The head domain (RuvB-H) stretch occupies residues 256–333; that stretch reads KLGLDHIDHK…EHFGMEMPKV (78 aa). The DNA site is built by arginine 311 and arginine 316.

This sequence belongs to the RuvB family. As to quaternary structure, homohexamer. Forms an RuvA(8)-RuvB(12)-Holliday junction (HJ) complex. HJ DNA is sandwiched between 2 RuvA tetramers; dsDNA enters through RuvA and exits via RuvB. An RuvB hexamer assembles on each DNA strand where it exits the tetramer. Each RuvB hexamer is contacted by two RuvA subunits (via domain III) on 2 adjacent RuvB subunits; this complex drives branch migration. In the full resolvosome a probable DNA-RuvA(4)-RuvB(12)-RuvC(2) complex forms which resolves the HJ.

The protein resides in the cytoplasm. The catalysed reaction is ATP + H2O = ADP + phosphate + H(+). Its function is as follows. The RuvA-RuvB-RuvC complex processes Holliday junction (HJ) DNA during genetic recombination and DNA repair, while the RuvA-RuvB complex plays an important role in the rescue of blocked DNA replication forks via replication fork reversal (RFR). RuvA specifically binds to HJ cruciform DNA, conferring on it an open structure. The RuvB hexamer acts as an ATP-dependent pump, pulling dsDNA into and through the RuvAB complex. RuvB forms 2 homohexamers on either side of HJ DNA bound by 1 or 2 RuvA tetramers; 4 subunits per hexamer contact DNA at a time. Coordinated motions by a converter formed by DNA-disengaged RuvB subunits stimulates ATP hydrolysis and nucleotide exchange. Immobilization of the converter enables RuvB to convert the ATP-contained energy into a lever motion, pulling 2 nucleotides of DNA out of the RuvA tetramer per ATP hydrolyzed, thus driving DNA branch migration. The RuvB motors rotate together with the DNA substrate, which together with the progressing nucleotide cycle form the mechanistic basis for DNA recombination by continuous HJ branch migration. Branch migration allows RuvC to scan DNA until it finds its consensus sequence, where it cleaves and resolves cruciform DNA. The protein is Holliday junction branch migration complex subunit RuvB of Bacillus mycoides (strain KBAB4) (Bacillus weihenstephanensis).